A 218-amino-acid polypeptide reads, in one-letter code: Octanoyltransferase (218 aa).

One can recognise a BPL/LPL catalytic domain in the interval 31-206; sequence REAGDEVWLV…QLVKHLDYAE (176 aa). Residues 70 to 77, 137 to 139, and 150 to 152 each bind substrate; these read RGGQVTYH, SLG, and GLA. Residue cysteine 168 is the Acyl-thioester intermediate of the active site.

This sequence belongs to the LipB family.

Its subcellular location is the cytoplasm. It carries out the reaction octanoyl-[ACP] + L-lysyl-[protein] = N(6)-octanoyl-L-lysyl-[protein] + holo-[ACP] + H(+). It participates in protein modification; protein lipoylation via endogenous pathway; protein N(6)-(lipoyl)lysine from octanoyl-[acyl-carrier-protein]: step 1/2. In terms of biological role, catalyzes the transfer of endogenously produced octanoic acid from octanoyl-acyl-carrier-protein onto the lipoyl domains of lipoate-dependent enzymes. Lipoyl-ACP can also act as a substrate although octanoyl-ACP is likely to be the physiological substrate. This is Octanoyltransferase from Pseudomonas syringae pv. tomato (strain ATCC BAA-871 / DC3000).